The sequence spans 146 residues: Large ribosomal subunit protein uL15 (146 aa).

The span at 1 to 13 (MKLHELKPSEGSR) shows a compositional bias: basic and acidic residues. Residues 1–57 (MKLHELKPSEGSRKTRNRVGRGIGSGNGKTAGKGHKGQNARSGGGVRPGFEGGQMPL) form a disordered region. Composition is skewed to gly residues over residues 21–31 (RGIGSGNGKTA) and 42–52 (SGGGVRPGFEG).

This sequence belongs to the universal ribosomal protein uL15 family. In terms of assembly, part of the 50S ribosomal subunit.

Its function is as follows. Binds to the 23S rRNA. The protein is Large ribosomal subunit protein uL15 of Bacillus subtilis (strain 168).